The following is a 265-amino-acid chain: Mlc titration factor A (265 aa).

4 residues coordinate Zn(2+): histidine 111, histidine 148, histidine 152, and glutamate 211.

The protein belongs to the MtfA family. As to quaternary structure, interacts with Mlc. Zn(2+) serves as cofactor.

It is found in the cytoplasm. Functionally, involved in the modulation of the activity of the glucose-phosphotransferase system (glucose-PTS). Interacts with the transcriptional repressor Mlc, preventing its interaction with DNA and leading to the modulation of expression of genes regulated by Mlc, including ptsG, which encodes the PTS system glucose-specific EIICB component. Shows zinc-dependent metallopeptidase activity. The polypeptide is Mlc titration factor A (Escherichia fergusonii).